We begin with the raw amino-acid sequence, 245 residues long: Chymotrypsin B (245 aa).

Cystine bridges form between Cys-1/Cys-121, Cys-42/Cys-58, Cys-135/Cys-201, Cys-167/Cys-182, and Cys-191/Cys-220. Positions 14 to 15 are excised as a propeptide; the sequence is AR. One can recognise a Peptidase S1 domain in the interval 16–243; it reads IVNGEEAVPH…LRGWVDQILA (228 aa). Residues His-57 and Asp-101 each act as charge relay system in the active site. The active-site Charge relay system is the Ser-195.

It belongs to the peptidase S1 family.

It is found in the secreted. The protein resides in the extracellular space. It catalyses the reaction Preferential cleavage: Tyr-|-Xaa, Trp-|-Xaa, Phe-|-Xaa, Leu-|-Xaa.. In Gadus morhua (Atlantic cod), this protein is Chymotrypsin B.